Here is a 971-residue protein sequence, read N- to C-terminus: Nitrogen regulatory protein areA (971 aa).

Disordered stretches follow at residues 39 to 61 (IHNA…DASA), 146 to 169 (HKEE…DAGS), 262 to 307 (QPAH…VNST), 390 to 416 (SASM…NVST), and 587 to 691 (DNNG…GNAP). Positions 42-59 (APTQRTXNSNRIPNSRDA) are enriched in polar residues. Basic and acidic residues predominate over residues 146–159 (HKEEQQQRQDEADA). Polar residues-rich tracts occupy residues 262–274 (QPAH…SEFN) and 297–307 (FSPQVPAVNST). Positions 390-400 (SASMSNNNNNS) are enriched in low complexity. 2 stretches are compositionally biased toward polar residues: residues 597–606 (LERSQSQSFR) and 632–645 (NGFE…QSSP). Low complexity-rich tracts occupy residues 654–663 (SGFSSVAPSR) and 680–691 (AAAGNGNDGNAP). Residues 694 to 718 (CTNCFTQTTPLWRRNPEGQPLCNAC) form a GATA-type zinc finger. The interval 742–918 (NRGSGTNVPV…PFGSSAGLSS (177 aa)) is disordered. A compositionally biased stretch (polar residues) spans 744-794 (GSGTNVPVGGSSTRSKKTASTLNSRKNSTLSMSTATANSTKPNSSNPTPRV). Low complexity predominate over residues 796–826 (TPPATSQPPSSKDVDSPVSGTTSGANTAGST). Residues 832–845 (GGPGPSSGAVGGKG) show a composition bias toward gly residues. Residues 863 to 875 (SSMSMQRPATASS) are compositionally biased toward polar residues. Over residues 892 to 918 (SMDIDSPDSTSSIDGPRPFGSSAGLSS) the composition is skewed to low complexity.

The protein localises to the nucleus. Major nitrogen regulatory protein. Positively acting regulatory gene of nitrogen metabolite repression. The polypeptide is Nitrogen regulatory protein areA (AREA) (Fusarium fujikuroi (Bakanae and foot rot disease fungus)).